We begin with the raw amino-acid sequence, 193 residues long: Bcl-2-binding component 3 (193 aa).

2 disordered regions span residues 1–31 and 71–131; these read MARA…GRLM and ALGG…VEEE. Serine 10 bears the Phosphoserine mark. The BH3 motif lies at 137–151; sequence IGAQLRRMADDLNAQ.

The protein belongs to the Bcl-2 family. Interacts with MCL1 and BCL2A1. Interacts with BCL2 and BCL2L1/BCL-XL. Interacts (via BH3 domain) with NOL3 (via CARD domain); this interaction prevents BBC3 association with BCL2 and results in CASP8 activation.

The protein localises to the mitochondrion. Essential mediator of p53/TP53-dependent and p53/TP53-independent apoptosis. Promotes partial unfolding of BCL2L1 and dissociation of BCL2L1 from p53/TP53, releasing the bound p53/TP53 to induce apoptosis. Regulates ER stress-induced neuronal apoptosis. This is Bcl-2-binding component 3 (Bbc3) from Mus musculus (Mouse).